The following is a 459-amino-acid chain: Elongation factor 1-alpha (459 aa).

Residue Gly-2 is modified to N,N,N-trimethylglycine. Lys-3 carries the post-translational modification N6,N6-dimethyllysine; alternate. Lys-3 is modified (N6-methyllysine; alternate). The tr-type G domain occupies Lys-5–Thr-239. The segment at Gly-14–Ser-21 is G1. Gly-14–Ser-21 serves as a coordination point for GTP. Lys-30 is subject to N6-methyllysine. A G2 region spans residues Gly-70 to Asp-74. Lys-79 is subject to N6,N6,N6-trimethyllysine. The interval Asp-91–Gly-94 is G3. GTP-binding positions include Asp-91–His-95 and Asn-153–Asp-156. Residues Asn-153–Asp-156 are G4. The tract at residues Ser-192–Phe-194 is G5. Lys-315 bears the N6,N6-dimethyllysine; alternate mark. N6-methyllysine; alternate is present on Lys-315. Lys-389 is subject to N6-methyllysine.

It belongs to the TRAFAC class translation factor GTPase superfamily. Classic translation factor GTPase family. EF-Tu/EF-1A subfamily.

The protein localises to the cytoplasm. Its function is as follows. This protein promotes the GTP-dependent binding of aminoacyl-tRNA to the A-site of ribosomes during protein biosynthesis. This chain is Elongation factor 1-alpha (TEF1), found in Aureobasidium pullulans (Black yeast).